The following is a 72-amino-acid chain: MSKVCVLTGKRPKYGNNVSHANNHTRTRFEPNLHTKRIWIEEEKCWVKVKLSAKAMKIISKTGTAKLAALLK.

It belongs to the bacterial ribosomal protein bL28 family.

The chain is Large ribosomal subunit protein bL28 from Chlorobium limicola (strain DSM 245 / NBRC 103803 / 6330).